Consider the following 349-residue polypeptide: Methionine import ATP-binding protein MetN (349 aa).

In terms of domain architecture, ABC transporter spans 5–245; sequence IDLKNITVQF…PQKQLTRQFV (241 aa). ATP is bound at residue 37–44; sequence GFSGAGKS.

It belongs to the ABC transporter superfamily. Methionine importer (TC 3.A.1.24) family. The complex is composed of two ATP-binding proteins (MetN), two transmembrane proteins (MetI) and a solute-binding protein (MetQ).

The protein resides in the cell membrane. The catalysed reaction is L-methionine(out) + ATP + H2O = L-methionine(in) + ADP + phosphate + H(+). It catalyses the reaction D-methionine(out) + ATP + H2O = D-methionine(in) + ADP + phosphate + H(+). Its function is as follows. Part of the ABC transporter complex MetNIQ involved in methionine import. Responsible for energy coupling to the transport system. The protein is Methionine import ATP-binding protein MetN of Lactobacillus johnsonii (strain CNCM I-12250 / La1 / NCC 533).